Here is a 337-residue protein sequence, read N- to C-terminus: Aspartate-semialdehyde dehydrogenase 2 (337 aa).

NADP(+) is bound by residues 13–16 (TGAV) and 41–42 (RS). R101 lines the phosphate pocket. C132 acts as the Acyl-thioester intermediate in catalysis. Q159 is a binding site for substrate. An NADP(+)-binding site is contributed by 162–163 (SG). Phosphate is bound at residue K216. R238 contacts substrate. H245 acts as the Proton acceptor in catalysis. NADP(+) is bound at residue N316.

It belongs to the aspartate-semialdehyde dehydrogenase family. Homodimer.

The enzyme catalyses L-aspartate 4-semialdehyde + phosphate + NADP(+) = 4-phospho-L-aspartate + NADPH + H(+). The protein operates within amino-acid biosynthesis; L-lysine biosynthesis via DAP pathway; (S)-tetrahydrodipicolinate from L-aspartate: step 2/4. It participates in amino-acid biosynthesis; L-methionine biosynthesis via de novo pathway; L-homoserine from L-aspartate: step 2/3. Its pathway is amino-acid biosynthesis; L-threonine biosynthesis; L-threonine from L-aspartate: step 2/5. Functionally, catalyzes the NADPH-dependent formation of L-aspartate-semialdehyde (L-ASA) by the reductive dephosphorylation of L-aspartyl-4-phosphate. This Vibrio cholerae serotype O1 (strain ATCC 39315 / El Tor Inaba N16961) protein is Aspartate-semialdehyde dehydrogenase 2 (asd2).